The chain runs to 962 residues: Translation initiation factor IF-2 (962 aa).

The segment at 99-366 is disordered; sequence VKAAQTQAAP…KKGKKLKLEP (268 aa). Positions 117–141 are enriched in basic and acidic residues; sequence DAAKARAEAAARAEARAKAEAEAAK. Residues 145-155 are compositionally biased toward low complexity; sequence AKAGNKAKPAA. Residues 173-216 are compositionally biased toward basic and acidic residues; that stretch reads KPAEESKAEKAQADKMPSEKPAEPKEKAAKPKHERNGKGKDAKK. A compositionally biased stretch (low complexity) spans 219–234; sequence KPAAPAVPQPVVSAEE. A compositionally biased stretch (basic and acidic residues) spans 235 to 269; it reads QAQRDEEARRAAALRAHQEALLKEKQERQARREAM. Over residues 270 to 283 the composition is skewed to low complexity; that stretch reads KQQAEQQAKAAQEA. Basic and acidic residues-rich tracts occupy residues 314 to 327 and 338 to 354; these read AKKEDRRNRDDEGQ and GGRDRNNARNGDDERVR. In terms of domain architecture, tr-type G spans 462–631; the sequence is PRPPVVTVMG…LLEAEVLELT (170 aa). The segment at 471 to 478 is G1; sequence GHVDHGKT. 471 to 478 is a GTP binding site; sequence GHVDHGKT. A G2 region spans residues 496–500; it reads GITQH. A G3 region spans residues 517-520; that stretch reads DTPG. GTP is bound by residues 517–521 and 571–574; these read DTPGH and NKID. The segment at 571 to 574 is G4; the sequence is NKID. Positions 607–609 are G5; it reads SAK.

This sequence belongs to the TRAFAC class translation factor GTPase superfamily. Classic translation factor GTPase family. IF-2 subfamily.

It localises to the cytoplasm. One of the essential components for the initiation of protein synthesis. Protects formylmethionyl-tRNA from spontaneous hydrolysis and promotes its binding to the 30S ribosomal subunits. Also involved in the hydrolysis of GTP during the formation of the 70S ribosomal complex. This chain is Translation initiation factor IF-2, found in Neisseria meningitidis serogroup B (strain ATCC BAA-335 / MC58).